A 262-amino-acid chain; its full sequence is Indole-3-glycerol phosphate synthase (262 aa).

It belongs to the TrpC family.

The catalysed reaction is 1-(2-carboxyphenylamino)-1-deoxy-D-ribulose 5-phosphate + H(+) = (1S,2R)-1-C-(indol-3-yl)glycerol 3-phosphate + CO2 + H2O. The protein operates within amino-acid biosynthesis; L-tryptophan biosynthesis; L-tryptophan from chorismate: step 4/5. This chain is Indole-3-glycerol phosphate synthase, found in Thiobacillus denitrificans (strain ATCC 25259 / T1).